We begin with the raw amino-acid sequence, 511 residues long: Tryptophan 5-halogenase PyrH (511 aa).

Residues Gly-10, Ala-13, Ser-36, Val-39, Ile-42, Val-44, and Ala-47 each contribute to the FAD site. Ser-50 contributes to the L-tryptophan binding site. The active site involves Lys-75. Positions 93, 160, and 163 each coordinate L-tryptophan. Val-195 and Leu-345 together coordinate FAD. Residues Thr-356 and Gly-357 each coordinate chloride. Ile-358 contributes to the FAD binding site. 2 residues coordinate L-tryptophan: Gly-450 and Tyr-454.

The protein belongs to the flavin-dependent halogenase family. Bacterial tryptophan halogenase subfamily. In terms of assembly, homodimer.

The catalysed reaction is L-tryptophan + FADH2 + chloride + O2 = 5-chloro-L-tryptophan + FAD + 2 H2O. The protein operates within antibiotic biosynthesis. Functionally, involved in the biosynthesis of the antibiotic compound pyrroindomycin B. Catalyzes the chlorination of tryptophan (Trp) at C5 position to yield 5-chloro-L-tryptophan. It is also able to use bromide ions to generate monobrominated Trp, but the brominating activity is only about 75% of the chlorinating activity. The protein is Tryptophan 5-halogenase PyrH of Streptomyces rugosporus.